The following is a 177-amino-acid chain: ECF RNA polymerase sigma factor SigL (177 aa).

The tract at residues 18–85 is sigma-70 factor domain-2; that stretch reads LYDEHAAVLW…MIIDERRSAR (68 aa). Residues 42 to 45 carry the Interaction with polymerase core subunit RpoC motif; the sequence is DVVQ. The tract at residues 119–167 is sigma-70 factor domain-4; sequence ALAQLSAEHRAVIQRSYYRGWSTAQIATDLGIAEGTVKSRLHYAVRALR. The segment at residues 141-160 is a DNA-binding region (H-T-H motif); that stretch reads TAQIATDLGIAEGTVKSRLH.

The protein belongs to the sigma-70 factor family. ECF subfamily. In terms of assembly, interacts transiently with the RNA polymerase catalytic core formed by RpoA, RpoB, RpoC and RpoZ (2 alpha, 1 beta, 1 beta' and 1 omega subunit) to form the RNA polymerase holoenzyme that can initiate transcription. Interacts (via sigma-70 factor domain 4) with anti-sigma-L factor RslA.

Its function is as follows. Sigma factors are initiation factors that promote the attachment of RNA polymerase to specific initiation sites and are then released. Extracytoplasmic function (ECF) sigma factors are held in an inactive form by an anti-sigma factor until released by regulated intramembrane proteolysis. This chain is ECF RNA polymerase sigma factor SigL (sigL), found in Mycobacterium tuberculosis (strain ATCC 35801 / TMC 107 / Erdman).